The following is a 193-amino-acid chain: Acyl carrier protein phosphodiesterase (193 aa).

This sequence belongs to the AcpH family.

It carries out the reaction holo-[ACP] + H2O = apo-[ACP] + (R)-4'-phosphopantetheine + H(+). Its function is as follows. Converts holo-ACP to apo-ACP by hydrolytic cleavage of the phosphopantetheine prosthetic group from ACP. This Pectobacterium atrosepticum (strain SCRI 1043 / ATCC BAA-672) (Erwinia carotovora subsp. atroseptica) protein is Acyl carrier protein phosphodiesterase.